We begin with the raw amino-acid sequence, 208 residues long: Ribosome maturation factor RimP (208 aa).

Belongs to the RimP family.

It localises to the cytoplasm. In terms of biological role, required for maturation of 30S ribosomal subunits. This Bartonella tribocorum (strain CIP 105476 / IBS 506) protein is Ribosome maturation factor RimP.